The chain runs to 129 residues: Chemotaxis protein CheY (129 aa).

A Response regulatory domain is found at 7-124 (KFLVVDDFST…TLEEKLNKIF (118 aa)). Residues Asp-12, Asp-13, Asp-57, and Asn-59 each contribute to the Mg(2+) site. The residue at position 57 (Asp-57) is a 4-aspartylphosphate. N6-acetyllysine is present on residues Lys-92 and Lys-109.

Mg(2+) is required as a cofactor. In terms of processing, phosphorylated by CheA or acetylated by acetyl-CoA synthetase, depending on which acetate metabolism pathway is available.

The protein localises to the cytoplasm. Involved in the transmission of sensory signals from the chemoreceptors to the flagellar motors. In its active (phosphorylated or acetylated) form, CheY exhibits enhanced binding to a switch component, FliM, at the flagellar motor which induces a change from counterclockwise to clockwise flagellar rotation. This chain is Chemotaxis protein CheY (cheY), found in Escherichia coli O6:H1 (strain CFT073 / ATCC 700928 / UPEC).